We begin with the raw amino-acid sequence, 178 residues long: Large ribosomal subunit protein uL5 (178 aa).

It belongs to the universal ribosomal protein uL5 family. In terms of assembly, part of the 50S ribosomal subunit; part of the 5S rRNA/L5/L18/L25 subcomplex. Contacts the 5S rRNA and the P site tRNA. Forms a bridge to the 30S subunit in the 70S ribosome.

Functionally, this is one of the proteins that bind and probably mediate the attachment of the 5S RNA into the large ribosomal subunit, where it forms part of the central protuberance. In the 70S ribosome it contacts protein S13 of the 30S subunit (bridge B1b), connecting the 2 subunits; this bridge is implicated in subunit movement. Contacts the P site tRNA; the 5S rRNA and some of its associated proteins might help stabilize positioning of ribosome-bound tRNAs. The chain is Large ribosomal subunit protein uL5 from Wolbachia pipientis subsp. Culex pipiens (strain wPip).